Here is an 89-residue protein sequence, read N- to C-terminus: Elongation factor 1-beta (89 aa).

This sequence belongs to the EF-1-beta/EF-1-delta family.

Promotes the exchange of GDP for GTP in EF-1-alpha/GDP, thus allowing the regeneration of EF-1-alpha/GTP that could then be used to form the ternary complex EF-1-alpha/GTP/AAtRNA. The polypeptide is Elongation factor 1-beta (Methanocella arvoryzae (strain DSM 22066 / NBRC 105507 / MRE50)).